The sequence spans 431 residues: L-ornithine N(5)-monooxygenase (431 aa).

Residues 40-48 (EKLPTFSWH) and glutamine 59 contribute to the FAD site. Lysine 64 is a binding site for substrate. NADP(+) contacts are provided by residues 202-205 (CGQS) and arginine 228. Residues 242–245 (NSLY) and asparagine 273 contribute to the substrate site. 273–275 (NYS) contributes to the NADP(+) binding site. An FAD-binding site is contributed by 399–401 (TLL). A substrate-binding site is contributed by serine 402.

The protein belongs to the lysine N(6)-hydroxylase/L-ornithine N(5)-oxygenase family. FAD is required as a cofactor.

It is found in the cytoplasm. It localises to the nucleus. It carries out the reaction L-ornithine + NADPH + O2 = N(5)-hydroxy-L-ornithine + NADP(+) + H2O. The catalysed reaction is L-ornithine + NADH + O2 = N(5)-hydroxy-L-ornithine + NAD(+) + H2O. Its pathway is siderophore biosynthesis; ferrichrome biosynthesis. Functionally, catalyzes the conversion of L-ornithine to N(5)-hydroxyornithine, the first step in the biosynthesis of all hydroxamate-containing siderophores, such as ferrichrome. This chain is L-ornithine N(5)-monooxygenase, found in Schizosaccharomyces pombe (strain 972 / ATCC 24843) (Fission yeast).